A 392-amino-acid polypeptide reads, in one-letter code: Protein SRL2 (392 aa).

Phosphoserine is present on Ser11. Residues 18 to 52 (KPSETPKMEEEKLEVTNVNASSSKKVHKSKKSTSK) are disordered. A compositionally biased stretch (basic and acidic residues) spans 21 to 31 (ETPKMEEEKLE). Basic residues predominate over residues 41–50 (KKVHKSKKST). Residue Ser139 is modified to Phosphoserine. Positions 284 to 303 (EDSTAVTNENGHISSEKNLK) are disordered. The segment covering 287 to 296 (TAVTNENGHI) has biased composition (polar residues).

The protein resides in the cytoplasm. It is found in the nucleus. This Saccharomyces cerevisiae (strain ATCC 204508 / S288c) (Baker's yeast) protein is Protein SRL2 (SRL2).